The following is a 201-amino-acid chain: MYTLLSGLYKYMFQKDEYCILILGLDNAGKTTFLEQSKTRFNKNYKGMSLSKITTTVGLNIGTVDVGKARLMFWDLGGQEELQSLWDKYYAECHGVIYVIDSTDEERLAESKQAFEKVVTSEALCGVPVLVLANKQDVETCLSIPDIKTAFSDCTSKIGRRDCLTQACSALTGKGVREGIEWMVKCVVRNVHRPPRQRDIT.

The residue at position 1 (M1) is an N-acetylmethionine. Residues 24 to 31, 75 to 79, and 134 to 137 each bind GTP; these read GLDNAGKT, DLGGQ, and NKQD.

It belongs to the small GTPase superfamily. Arf family. In terms of assembly, interacts with SYS1.

It localises to the golgi apparatus. Its subcellular location is the trans-Golgi network. Trans-Golgi-associated GTPase that regulates protein sorting. Controls the targeting of ARL1 and its effector to the trans-Golgi. Required for the lipidation of chylomicrons in the intestine and required for VLDL lipidation in the liver. This chain is ADP-ribosylation factor-related protein 1 (ARFRP1), found in Pongo abelii (Sumatran orangutan).